A 272-amino-acid polypeptide reads, in one-letter code: NADPH-dependent 7-cyano-7-deazaguanine reductase (272 aa).

82-84 contacts substrate; that stretch reads IES. 84 to 85 contacts NADPH; the sequence is SK. Cysteine 178 serves as the catalytic Thioimide intermediate. The active-site Proton donor is aspartate 185. Residue 217-218 participates in substrate binding; the sequence is HE. Residue 246-247 participates in NADPH binding; it reads RG.

Belongs to the GTP cyclohydrolase I family. QueF type 2 subfamily. Homodimer.

It localises to the cytoplasm. It catalyses the reaction 7-aminomethyl-7-carbaguanine + 2 NADP(+) = 7-cyano-7-deazaguanine + 2 NADPH + 3 H(+). It functions in the pathway tRNA modification; tRNA-queuosine biosynthesis. Functionally, catalyzes the NADPH-dependent reduction of 7-cyano-7-deazaguanine (preQ0) to 7-aminomethyl-7-deazaguanine (preQ1). This is NADPH-dependent 7-cyano-7-deazaguanine reductase from Stenotrophomonas maltophilia (strain R551-3).